We begin with the raw amino-acid sequence, 245 residues long: tRNA1(Val) (adenine(37)-N6)-methyltransferase (245 aa).

It belongs to the methyltransferase superfamily. tRNA (adenine-N(6)-)-methyltransferase family.

It is found in the cytoplasm. It catalyses the reaction adenosine(37) in tRNA1(Val) + S-adenosyl-L-methionine = N(6)-methyladenosine(37) in tRNA1(Val) + S-adenosyl-L-homocysteine + H(+). Its function is as follows. Specifically methylates the adenine in position 37 of tRNA(1)(Val) (anticodon cmo5UAC). This chain is tRNA1(Val) (adenine(37)-N6)-methyltransferase, found in Escherichia coli O139:H28 (strain E24377A / ETEC).